The chain runs to 86 residues: BaSO(4)-adsorbing protein 1 (86 aa).

Disulfide bonds link cysteine 6-cysteine 22, cysteine 18-cysteine 49, and cysteine 39-cysteine 54. The interval 58 to 86 (GDSASNTQNQGGSRRQENEDQGDDEWDRK) is disordered. Residues 59-70 (DSASNTQNQGGS) are compositionally biased toward polar residues. A compositionally biased stretch (acidic residues) spans 76–86 (EDQGDDEWDRK).

As to expression, salivary gland (at protein level).

It is found in the secreted. In terms of biological role, inhibits lectin and classical pathways of complement system activation in the host with no significant effect on the alternative pathway. Inhibits host extrinsic blood coagulation pathway but not the intrinsic cascade. Binds to neutral and negatively charged membranes in vitro; binding is reduced upon pre-incubation with Ca(2+). The chain is BaSO(4)-adsorbing protein 1 from Ornithodoros savignyi (African eyed tampan).